The primary structure comprises 339 residues: Lipoyl synthase (339 aa).

The disordered stretch occupies residues 13–35; that stretch reads RPKLDAPARPRHPEKAHRPDTAI. [4Fe-4S] cluster contacts are provided by Cys68, Cys73, Cys79, Cys94, Cys98, Cys101, and Ser307. In terms of domain architecture, Radical SAM core spans 80–296; it reads WEKRHATFMI…ETTAYAKGFL (217 aa).

It belongs to the radical SAM superfamily. Lipoyl synthase family. Requires [4Fe-4S] cluster as cofactor.

The protein resides in the cytoplasm. It catalyses the reaction [[Fe-S] cluster scaffold protein carrying a second [4Fe-4S](2+) cluster] + N(6)-octanoyl-L-lysyl-[protein] + 2 oxidized [2Fe-2S]-[ferredoxin] + 2 S-adenosyl-L-methionine + 4 H(+) = [[Fe-S] cluster scaffold protein] + N(6)-[(R)-dihydrolipoyl]-L-lysyl-[protein] + 4 Fe(3+) + 2 hydrogen sulfide + 2 5'-deoxyadenosine + 2 L-methionine + 2 reduced [2Fe-2S]-[ferredoxin]. It participates in protein modification; protein lipoylation via endogenous pathway; protein N(6)-(lipoyl)lysine from octanoyl-[acyl-carrier-protein]: step 2/2. Its function is as follows. Catalyzes the radical-mediated insertion of two sulfur atoms into the C-6 and C-8 positions of the octanoyl moiety bound to the lipoyl domains of lipoate-dependent enzymes, thereby converting the octanoylated domains into lipoylated derivatives. The protein is Lipoyl synthase of Methylorubrum extorquens (strain CM4 / NCIMB 13688) (Methylobacterium extorquens).